The following is a 284-amino-acid chain: Probable 3-mercaptopyruvate sulfurtransferase (284 aa).

Rhodanese domains lie at 17–138 (SEPD…ALTN) and 168–281 (GQPG…RPVA). R182 is a binding site for substrate. C241 acts as the Cysteine persulfide intermediate in catalysis. The substrate specificity stretch occupies residues 241-247 (CGSGVTA).

It is found in the cytoplasm. The enzyme catalyses 2-oxo-3-sulfanylpropanoate + [thioredoxin]-dithiol = [thioredoxin]-disulfide + hydrogen sulfide + pyruvate + H(+). Catalyzes the transfer of sulfur from 3-mercaptopyruvate to a thiol-containing acceptor to form an intramolecular disulfide releasing hydrogen sulfide and pyruvate. The chain is Probable 3-mercaptopyruvate sulfurtransferase (sseA) from Pseudomonas aeruginosa (strain ATCC 15692 / DSM 22644 / CIP 104116 / JCM 14847 / LMG 12228 / 1C / PRS 101 / PAO1).